Here is a 509-residue protein sequence, read N- to C-terminus: AAA ATPase forming ring-shaped complexes (509 aa).

Residues 11–50 are a coiled coil; the sequence is AHLQRTISNLSARNAKLAELLKASRDKLSILQDQLEDLAA. Position 236–241 (236–241) interacts with ATP; sequence GCGKTL.

This sequence belongs to the AAA ATPase family. As to quaternary structure, homohexamer. Assembles into a hexameric ring structure.

This is AAA ATPase forming ring-shaped complexes from Corynebacterium diphtheriae (strain ATCC 700971 / NCTC 13129 / Biotype gravis).